The following is a 215-amino-acid chain: Ribosomal RNA small subunit methyltransferase G (215 aa).

S-adenosyl-L-methionine-binding positions include Gly82, Met87, Val133–Glu134, and Arg148.

Belongs to the methyltransferase superfamily. RNA methyltransferase RsmG family.

The protein resides in the cytoplasm. It carries out the reaction guanosine(527) in 16S rRNA + S-adenosyl-L-methionine = N(7)-methylguanosine(527) in 16S rRNA + S-adenosyl-L-homocysteine. Its function is as follows. Specifically methylates the N7 position of guanine in position 527 of 16S rRNA. In Stutzerimonas stutzeri (strain A1501) (Pseudomonas stutzeri), this protein is Ribosomal RNA small subunit methyltransferase G.